The chain runs to 148 residues: Deoxyuridine 5'-triphosphate nucleotidohydrolase (148 aa).

Substrate-binding positions include 67–69 (RSG), Asn80, 84–86 (TID), and Lys94.

This sequence belongs to the dUTPase family. Mg(2+) is required as a cofactor.

The catalysed reaction is dUTP + H2O = dUMP + diphosphate + H(+). The protein operates within pyrimidine metabolism; dUMP biosynthesis; dUMP from dCTP (dUTP route): step 2/2. In terms of biological role, this enzyme is involved in nucleotide metabolism: it produces dUMP, the immediate precursor of thymidine nucleotides and it decreases the intracellular concentration of dUTP so that uracil cannot be incorporated into DNA. In Orientia tsutsugamushi (strain Boryong) (Rickettsia tsutsugamushi), this protein is Deoxyuridine 5'-triphosphate nucleotidohydrolase.